Consider the following 78-residue polypeptide: Small ribosomal subunit protein bS18 (78 aa).

Belongs to the bacterial ribosomal protein bS18 family. Part of the 30S ribosomal subunit. Forms a tight heterodimer with protein bS6.

Its function is as follows. Binds as a heterodimer with protein bS6 to the central domain of the 16S rRNA, where it helps stabilize the platform of the 30S subunit. This is Small ribosomal subunit protein bS18 from Limosilactobacillus reuteri (strain DSM 20016) (Lactobacillus reuteri).